The following is a 122-amino-acid chain: Large ribosomal subunit protein uL14c (122 aa).

The protein belongs to the universal ribosomal protein uL14 family. As to quaternary structure, part of the 50S ribosomal subunit.

The protein localises to the plastid. The protein resides in the chloroplast. Functionally, binds to 23S rRNA. This is Large ribosomal subunit protein uL14c from Fagopyrum esculentum subsp. ancestrale (Wild buckwheat).